Here is a 176-residue protein sequence, read N- to C-terminus: Small ribosomal subunit protein uS4 (176 aa).

Residues 104 to 166 (RRLQTIVYKK…PTSPFKQNPP (63 aa)) form the S4 RNA-binding domain.

It belongs to the universal ribosomal protein uS4 family. As to quaternary structure, part of the 30S ribosomal subunit. Contacts protein S5. The interaction surface between S4 and S5 is involved in control of translational fidelity.

One of the primary rRNA binding proteins, it binds directly to 16S rRNA where it nucleates assembly of the body of the 30S subunit. Its function is as follows. With S5 and S12 plays an important role in translational accuracy. The polypeptide is Small ribosomal subunit protein uS4 (rps4) (Sulfolobus acidocaldarius (strain ATCC 33909 / DSM 639 / JCM 8929 / NBRC 15157 / NCIMB 11770)).